Here is an 875-residue protein sequence, read N- to C-terminus: MTLARFVLALMLGALPEVVGFDSVLNDSLHHSHRHSPPAGPHYPYYLPTQQRPPRTRPPPPLPRFPRPPRALPAQRPHALQAGHTPRPHPWGCPAGEPWVSVTDFGAPCLRWAEVPPFLERSPPASWAQLRGQRHNFCRSPDGAGRPWCFYGDARGKVDWGYCDCRHGSVRLRGGKNEFEGTVEVYASGVWGTVCSSHWDDSDASVICHQLQLGGKGIAKQTPFSGLGLIPIYWSNVRCRGDEENILLCEKDIWQGGVCPQKMAAAVTCSFSHGPTFPIIRLAGGSSVHEGRVELYHAGQWGTVCDDQWDDADAEVICRQLGLSGIAKAWHQAYFGEGSGPVMLDEVRCTGNELSIEQCPKSSWGEHNCGHKEDAGVSCTPLTDGVIRLAGGKGSHEGRLEVYYRGQWGTVCDDGWTELNTYVVCRQLGFKYGKQASANHFEESTGPIWLDDVSCSGKETRFLQCSRRQWGRHDCSHREDVSIACYPGGEGHRLSLGFPVRLMDGENKKEGRVEVFINGQWGTICDDGWTDKDAAVICRQLGYKGPARARTMAYFGEGKGPIHVDNVKCTGNERSLADCIKQDIGRHNCRHSEDAGVICDYFGKKASGNSNKESLSSVCGLRLLHRRQKRIIGGKNSLRGGWPWQVSLRLKSSHGDGRLLCGATLLSSCWVLTAAHCFKRYGNSTRSYAVRVGDYHTLVPEEFEEEIGVQQIVIHREYRPDRSDYDIALVRLQGPEEQCARFSSHVLPACLPLWRERPQKTASNCYITGWGDTGRAYSRTLQQAAIPLLPKRFCEERYKGRFTGRMLCAGNLHEHKRVDSCQGDSGGPLMCERPGESWVVYGVTSWGYGCGVKDSPGVYTKVSAFVPWIKSVTKL.

An N-terminal signal peptide occupies residues 1–20 (MTLARFVLALMLGALPEVVG). N-linked (GlcNAc...) asparagine glycosylation occurs at N26. Positions 29–88 (LHHSHRHSPPAGPHYPYYLPTQQRPPRTRPPPPLPRFPRPPRALPAQRPHALQAGHTPRP) are disordered. Residues 56–71 (TRPPPPLPRFPRPPRA) show a composition bias toward pro residues. Positions 93–165 (CPAGEPWVSV…GKVDWGYCDC (73 aa)) constitute a Kringle domain. Intrachain disulfides connect C93-C165, C109-C149, C138-C163, C195-C259, C208-C269, C239-C249, C305-C369, C318-C379, C349-C359, C412-C475, C425-C485, C455-C465, C525-C589, C538-C599, C569-C579, C619-C750, C661-C677, C765-C831, C794-C808, and C821-C850. SRCR domains follow at residues 170 to 271 (VRLR…TCSF), 280 to 381 (IRLA…SCTP), 387 to 487 (IRLA…ACYP), and 500 to 601 (VRLM…ICDY). The tract at residues 619–630 (CGLRLLHRRQKR) is zymogen activation region. Residues 631–874 (IIGGKNSLRG…FVPWIKSVTK (244 aa)) form the Peptidase S1 domain. H676 acts as the Charge relay system in catalysis. N-linked (GlcNAc...) asparagine glycosylation occurs at N683. Residue D726 is the Charge relay system of the active site. S825 (charge relay system) is an active-site residue.

The protein belongs to the peptidase S1 family. In terms of tissue distribution, brain and Leydig cells of the testis.

Its subcellular location is the secreted. Plays a role in neuronal plasticity and the proteolytic action may subserve structural reorganizations associated with learning and memory operations. This Homo sapiens (Human) protein is Neurotrypsin (PRSS12).